Consider the following 674-residue polypeptide: 1,4-alpha-glucan branching enzyme GlgB 1 (674 aa).

Aspartate 336 serves as the catalytic Nucleophile. The active-site Proton donor is the glutamate 389.

The protein belongs to the glycosyl hydrolase 13 family. GlgB subfamily. As to quaternary structure, monomer.

The enzyme catalyses Transfers a segment of a (1-&gt;4)-alpha-D-glucan chain to a primary hydroxy group in a similar glucan chain.. Its pathway is glycan biosynthesis; glycogen biosynthesis. Catalyzes the formation of the alpha-1,6-glucosidic linkages in glycogen by scission of a 1,4-alpha-linked oligosaccharide from growing alpha-1,4-glucan chains and the subsequent attachment of the oligosaccharide to the alpha-1,6 position. This chain is 1,4-alpha-glucan branching enzyme GlgB 1, found in Clostridium perfringens (strain SM101 / Type A).